The chain runs to 224 residues: UPF0758 protein VV1_0825 (224 aa).

Positions 1 to 20 (MSLKNLPSESMPREKLLQRG) are disordered. In terms of domain architecture, MPN spans 102–224 (ALTSPQHTKL…VVSFAERGWI (123 aa)). The Zn(2+) site is built by histidine 173, histidine 175, and aspartate 186. Positions 173-186 (HNHPSGVAEPSQAD) match the JAMM motif motif.

Belongs to the UPF0758 family.

In Vibrio vulnificus (strain CMCP6), this protein is UPF0758 protein VV1_0825.